A 91-amino-acid polypeptide reads, in one-letter code: UPF0147 protein APE_2336a (91 aa).

This sequence belongs to the UPF0147 family.

This chain is UPF0147 protein APE_2336a, found in Aeropyrum pernix (strain ATCC 700893 / DSM 11879 / JCM 9820 / NBRC 100138 / K1).